The following is a 399-amino-acid chain: 3-phosphoshikimate 1-carboxyvinyltransferase (399 aa).

3-phosphoshikimate is bound by residues Lys19, Ser20, and Arg24. A phosphoenolpyruvate-binding site is contributed by Lys19. 2 residues coordinate phosphoenolpyruvate: Gly83 and Arg111. Ser152, Ser153, Gln154, Asp288, Gln310, and Lys314 together coordinate 3-phosphoshikimate. Gln154 is a binding site for phosphoenolpyruvate. The active-site Proton acceptor is the Asp288. 3 residues coordinate phosphoenolpyruvate: Arg318, Arg359, and Lys385.

This sequence belongs to the EPSP synthase family. As to quaternary structure, monomer.

The protein resides in the cytoplasm. It catalyses the reaction 3-phosphoshikimate + phosphoenolpyruvate = 5-O-(1-carboxyvinyl)-3-phosphoshikimate + phosphate. Its pathway is metabolic intermediate biosynthesis; chorismate biosynthesis. Catalyzes the transfer of the enolpyruvyl moiety of phosphoenolpyruvate (PEP) to the 5-hydroxyl of shikimate-3-phosphate (S3P) to produce enolpyruvyl shikimate-3-phosphate and inorganic phosphate. This is 3-phosphoshikimate 1-carboxyvinyltransferase from Thermococcus kodakarensis (strain ATCC BAA-918 / JCM 12380 / KOD1) (Pyrococcus kodakaraensis (strain KOD1)).